Consider the following 211-residue polypeptide: uncharacterized protein (211 aa).

This is an uncharacterized protein from Methanocaldococcus jannaschii (strain ATCC 43067 / DSM 2661 / JAL-1 / JCM 10045 / NBRC 100440) (Methanococcus jannaschii).